A 381-amino-acid polypeptide reads, in one-letter code: Mannitol-1-phosphate 5-dehydrogenase (381 aa).

3–14 contacts NAD(+); it reads TLHFGAGNIGRG.

Belongs to the mannitol dehydrogenase family.

The enzyme catalyses D-mannitol 1-phosphate + NAD(+) = beta-D-fructose 6-phosphate + NADH + H(+). The sequence is that of Mannitol-1-phosphate 5-dehydrogenase from Aeromonas salmonicida (strain A449).